The following is a 1724-amino-acid chain: Sperm flagellar protein 2 (1724 aa).

The Calponin-homology (CH) domain maps to 1–105 (MSEILCQWLN…LLYQLYIALQ (105 aa)). 2 coiled-coil regions span residues 170–203 (KAIE…KDLQ) and 255–351 (RRLL…REKE). The interval 545–576 (HERQKSGKTPPTQEDDKRDPVVNQEKVSKTQD) is disordered. A compositionally biased stretch (basic and acidic residues) spans 558-576 (EDDKRDPVVNQEKVSKTQD). Residues 665–691 (NQAKLLEEALTGYKRKFLQLKKKKEQM) are a coiled coil. A disordered region spans residues 828–910 (EEKETEKKAG…PTAPPPPKAG (83 aa)). Over residues 853–862 (EAEKDKELHQ) the composition is skewed to basic and acidic residues. A coiled-coil region spans residues 995–1021 (EDLWEDEETKAELHQRVNDLRDRLWDI). Basic and acidic residues predominate over residues 1177–1194 (RLTEEEKEPPQLDSKEKS). Disordered regions lie at residues 1177-1241 (RLTE…EMAE), 1580-1618 (VSPI…NANT), and 1704-1724 (SEHA…DEKK). Positions 1210 to 1221 (PKKKKTDKKGKG) are enriched in basic residues. An interaction with IFT20 region spans residues 1228 to 1580 (EVSPVTVTPE…MAEKTSISTV (353 aa)). Positions 1592–1607 (SSAKEDRELKEEKDDQ) are enriched in basic and acidic residues.

As to quaternary structure, interacts (via C-terminus) with IFT20. Interacts with DYNC1I2. Highly expressed in testis, where it primarily localizes to late spermatocytes, round spermatids and elongating spermatids (at protein level). Found in Sertoli cells of the testis (at protein level). Expressed at lower levels in epididymis (at protein level). Detected in lung, brain, liver and kidney. Also detected in bone, cartilage, trachea, pituitary gland and eye. Expressed in osteoblasts and chondrocytes.

The protein localises to the cell projection. It is found in the cilium. Its subcellular location is the flagellum. It localises to the cytoplasm. The protein resides in the cytoskeleton. The protein localises to the golgi apparatus. Required for correct axoneme development in spermatozoa. Important for normal development of the manchette and sperm head morphology. Essential for male fertility. Plays a role in localization of the intraflagellar transport protein IFT20 to the manchette, suggesting function as an adapter for dynein-mediated protein transport during spermatogenesis. Also plays a role in bone growth where it seems to be required for normal osteoblast differentiation. In Mus musculus (Mouse), this protein is Sperm flagellar protein 2 (Spef2).